A 422-amino-acid polypeptide reads, in one-letter code: Phagosome assembly factor 1 (422 aa).

It belongs to the PHAF1 family. Interacts with BCAS3; the interaction is requrired for the association with the phagophore.

The protein localises to the cytoplasm. The protein resides in the preautophagosomal structure. In terms of biological role, plays a regulatory role in autophagic activity. In complex with BCAS3, associates with the autophagosome formation site during both non-selective and selective autophagy. In Mus musculus (Mouse), this protein is Phagosome assembly factor 1.